Reading from the N-terminus, the 362-residue chain is Histidinol-phosphate aminotransferase (362 aa).

The residue at position 218 (lysine 218) is an N6-(pyridoxal phosphate)lysine.

The protein belongs to the class-II pyridoxal-phosphate-dependent aminotransferase family. Histidinol-phosphate aminotransferase subfamily. In terms of assembly, homodimer. Requires pyridoxal 5'-phosphate as cofactor.

It catalyses the reaction L-histidinol phosphate + 2-oxoglutarate = 3-(imidazol-4-yl)-2-oxopropyl phosphate + L-glutamate. The protein operates within amino-acid biosynthesis; L-histidine biosynthesis; L-histidine from 5-phospho-alpha-D-ribose 1-diphosphate: step 7/9. The chain is Histidinol-phosphate aminotransferase from Xanthomonas campestris pv. campestris (strain B100).